Consider the following 977-residue polypeptide: Macrophage colony-stimulating factor 1 receptor (977 aa).

The first 19 residues, 1 to 19 (MELGPPLVLLLATVWHGQG), serve as a signal peptide directing secretion. Residues 20–515 (APVIEPSGPE…QLPDESLFTP (496 aa)) are Extracellular-facing. 5 Ig-like C2-type domains span residues 24–104 (EPSG…VKDP), 107–197 (SWNL…KVNR), 204–298 (QIKL…VVES), 299–397 (AYLN…LTLR), and 398–503 (YPPE…SLGQ). Cystine bridges form between Cys42/Cys84, Cys127/Cys177, and Cys224/Cys278. Asn45 and Asn73 each carry an N-linked (GlcNAc...) asparagine glycan. Residues Asn302, Asn335, Asn389, Asn410, Asn449, Asn478, and Asn491 are each glycosylated (N-linked (GlcNAc...) asparagine). An intrachain disulfide couples Cys417 to Cys483. A helical transmembrane segment spans residues 516-536 (VVVACMSVMSLLVLLLLLLLY). Residues 537 to 977 (KYKQKPKYQV…LLQPNNYQFC (441 aa)) are Cytoplasmic-facing. The regulatory juxtamembrane domain stretch occupies residues 540 to 572 (QKPKYQVRWKIIERYEGNSYTFIDPTQLPYNEK). Residues Tyr544 and Tyr559 each carry the phosphotyrosine; by autocatalysis modification. One can recognise a Protein kinase domain in the interval 580-913 (LQFGKTLGAG…ICFLLQEQAR (334 aa)). ATP is bound by residues 586 to 594 (LGAGAFGKV) and Lys614. 2 positions are modified to phosphotyrosine; by autocatalysis: Tyr697 and Tyr706. Phosphoserine is present on Ser711. The residue at position 721 (Tyr721) is a Phosphotyrosine; by autocatalysis. The active-site Proton acceptor is the Asp776. Residues 794–816 (DFGLARDIMNDSNYVVKGNARLP) form an activation loop region. Phosphotyrosine; by autocatalysis is present on residues Tyr807 and Tyr921. Residues 921 to 957 (YANLPSSGGSSGSDSGGGSSGGSSSEPEEESSSEHLA) form a disordered region. Residues 929–941 (GSSGSDSGGGSSG) are compositionally biased toward gly residues. Tyr974 bears the Phosphotyrosine; by autocatalysis mark.

The protein belongs to the protein kinase superfamily. Tyr protein kinase family. CSF-1/PDGF receptor subfamily. As to quaternary structure, monomer. Homodimer. Interacts with CSF1 and IL34. Interaction with dimeric CSF1 or IL34 leads to receptor homodimerization. Interacts with INPPL1/SHIP2 and THOC5. Interacts (tyrosine phosphorylated) with PLCG2 (via SH2 domain). Interacts (tyrosine phosphorylated) with PIK3R1 (via SH2 domain). Interacts (tyrosine phosphorylated) with FYN, YES1 and SRC (via SH2 domain). Interacts (tyrosine phosphorylated) with CBL, GRB2 and SLA2. Post-translationally, autophosphorylated in response to CSF1 or IL34 binding. Phosphorylation at Tyr-559 is important for normal down-regulation of signaling by ubiquitination, internalization and degradation. Phosphorylation at Tyr-559 and Tyr-807 is important for interaction with SRC family members, including FYN, YES1 and SRC, and for subsequent activation of these protein kinases. Phosphorylation at Tyr-697 and Tyr-921 is important for interaction with GRB2. Phosphorylation at Tyr-721 is important for interaction with PIK3R1. Phosphorylation at Tyr-721 and Tyr-807 is important for interaction with PLCG2. Phosphorylation at Tyr-974 is important for interaction with CBL. Dephosphorylation by PTPN2 negatively regulates downstream signaling and macrophage differentiation. Ubiquitinated. Becomes rapidly polyubiquitinated after autophosphorylation, leading to its degradation. In terms of tissue distribution, widely expressed.

Its subcellular location is the cell membrane. The catalysed reaction is L-tyrosyl-[protein] + ATP = O-phospho-L-tyrosyl-[protein] + ADP + H(+). Its activity is regulated as follows. Present in an inactive conformation in the absence of bound ligand. CSF1 or IL34 binding leads to dimerization and activation by autophosphorylation on tyrosine residues. Inhibited by imatinib/STI-571 (Gleevec), dasatinib, sunitinib/SU11248, lestaurtinib/CEP-701, midostaurin/PKC-412, Ki20227, linifanib/ABT-869, Axitinib/AG013736, sorafenib/BAY 43-9006 and GW2580. Functionally, tyrosine-protein kinase that acts as a cell-surface receptor for CSF1 and IL34 and plays an essential role in the regulation of survival, proliferation and differentiation of hematopoietic precursor cells, especially mononuclear phagocytes, such as macrophages and monocytes. Promotes the release of pro-inflammatory chemokines in response to IL34 and CSF1, and thereby plays an important role in innate immunity and in inflammatory processes. Plays an important role in the regulation of osteoclast proliferation and differentiation, the regulation of bone resorption, and is required for normal bone and tooth development. Required for normal male and female fertility, and for normal development of milk ducts and acinar structures in the mammary gland during pregnancy. Promotes reorganization of the actin cytoskeleton, regulates formation of membrane ruffles, cell adhesion and cell migration, and promotes cancer cell invasion. Activates several signaling pathways in response to ligand binding, including the ERK1/2 and the JNK pathway. Phosphorylates PIK3R1, PLCG2, GRB2, SLA2 and CBL. Activation of PLCG2 leads to the production of the cellular signaling molecules diacylglycerol and inositol 1,4,5-trisphosphate, that then lead to the activation of protein kinase C family members, especially PRKCD. Phosphorylation of PIK3R1, the regulatory subunit of phosphatidylinositol 3-kinase, leads to activation of the AKT1 signaling pathway. Activated CSF1R also mediates activation of the MAP kinases MAPK1/ERK2 and/or MAPK3/ERK1, and of the SRC family kinases SRC, FYN and YES1. Activated CSF1R transmits signals both via proteins that directly interact with phosphorylated tyrosine residues in its intracellular domain, or via adapter proteins, such as GRB2. Promotes activation of STAT family members STAT3, STAT5A and/or STAT5B. Promotes tyrosine phosphorylation of SHC1 and INPP5D/SHIP-1. Receptor signaling is down-regulated by protein phosphatases, such as INPP5D/SHIP-1, that dephosphorylate the receptor and its downstream effectors, and by rapid internalization of the activated receptor. In the central nervous system, may play a role in the development of microglia macrophages. The chain is Macrophage colony-stimulating factor 1 receptor (Csf1r) from Mus musculus (Mouse).